The sequence spans 534 residues: MGCVQCKDKEATKLTDERDGSLTQSSGYRYGTDPTPQHYPSFGVTSIPNYNNFHATGGQGLTVFGGVNSSSHTGTLRTRGGTGVTLFEALYDYEARTEDDLSFHKGEKFQILNSSEGDWWEARSLTTGETGYIPSNYVAPVDSIQAEEWYFGKLGRKDAERQLLSFGNPRGTFLIRESETTKGAYSLSIRDWDDMKGDHVKHYKIRKLDNGGYYITTRAQFETLQQLVQHYSEKADGLCFNLTVIATNNTPQTVGLAKDAWEVARDSLFLEQKLGQGCFAEVWRGTWNGNTKVAIKTLKPGTMSPESFLEEAQIMKKLKHDKLVQLYAVVSRRPIYIVTEYMSKGSLLIFLKDGEGRALKLPNLVDMAAQVAAGMAYIERMNYIHRDLRSANILVGNGLICKIADFGLARLIEDNEYTARQGAKFPIKWTAPEAALYGRFTIKSDVWSFGILLTELVTKGRVPYPGMNNREVLEQVERGYRMPCPQDCPISLHELMIHCWKKDPEERPTFEYLQGFLEDYFTATEPQYQPGDNL.

The N-myristoyl glycine moiety is linked to residue Gly-2. S-palmitoyl cysteine attachment occurs at residues Cys-3 and Cys-6. The residue at position 12 (Thr-12) is a Phosphothreonine; by PKC. The tract at residues 15-39 (TDERDGSLTQSSGYRYGTDPTPQHY) is disordered. Positions 82 to 143 (TGVTLFEALY…PSNYVAPVDS (62 aa)) constitute an SH3 domain. The SH2 domain maps to 149–246 (WYFGKLGRKD…GLCFNLTVIA (98 aa)). Residues 268-521 (LFLEQKLGQG…YLQGFLEDYF (254 aa)) form the Protein kinase domain. ATP contacts are provided by residues 274–282 (LGQGCFAEV) and Lys-296. Residue Asp-387 is the Proton acceptor of the active site. At Tyr-417 the chain carries Phosphotyrosine; by autocatalysis. The residue at position 528 (Tyr-528) is a Phosphotyrosine.

It belongs to the protein kinase superfamily. Tyr protein kinase family. SRC subfamily. In terms of assembly, associates through its SH3 domain, to the p85 subunit of phosphatidylinositol 3-kinase. Requires Mn(2+) as cofactor. As to expression, thymus and spleen.

Its subcellular location is the cytoplasm. The protein localises to the nucleus. The protein resides in the cell membrane. It is found in the perikaryon. The catalysed reaction is L-tyrosyl-[protein] + ATP = O-phospho-L-tyrosyl-[protein] + ADP + H(+). Inhibited by phosphorylation of Tyr-528 by leukocyte common antigen and activated by dephosphorylation of this site. Functionally, tyrosine-protein kinase implicated in the control of cell growth. Plays a role in the regulation of intracellular calcium levels. Required in brain development and mature brain function with important roles in the regulation of axon growth, axon guidance, and neurite extension. Role in CNTN1-mediated signaling. In Gallus gallus (Chicken), this protein is Tyrosine-protein kinase Fyn (FYN).